Consider the following 328-residue polypeptide: DNA-directed RNA polymerase subunit alpha (328 aa).

Residues 1–231 form an alpha N-terminal domain (alpha-NTD) region; sequence MIYQMQMPTK…DHITFFANFS (231 aa). Residues 247–328 are alpha C-terminal domain (alpha-CTD); that stretch reads DEFESMRKLL…MDITRYQLKG (82 aa).

The protein belongs to the RNA polymerase alpha chain family. In terms of assembly, homodimer. The RNAP catalytic core consists of 2 alpha, 1 beta, 1 beta' and 1 omega subunit. When a sigma factor is associated with the core the holoenzyme is formed, which can initiate transcription.

It catalyses the reaction RNA(n) + a ribonucleoside 5'-triphosphate = RNA(n+1) + diphosphate. Functionally, DNA-dependent RNA polymerase catalyzes the transcription of DNA into RNA using the four ribonucleoside triphosphates as substrates. This is DNA-directed RNA polymerase subunit alpha from Chlorobaculum tepidum (strain ATCC 49652 / DSM 12025 / NBRC 103806 / TLS) (Chlorobium tepidum).